The sequence spans 181 residues: Succinate dehydrogenase [ubiquinone] cytochrome b small subunit, mitochondrial (181 aa).

The N-terminal 31 residues, methionine 1–serine 31, are a transit peptide targeting the mitochondrion. Topologically, residues leucine 32–serine 66 are mitochondrial matrix. Residues tyrosine 67–leucine 88 form a helical membrane-spanning segment. The Mitochondrial intermembrane portion of the chain corresponds to threonine 89–aspartate 98. Residues serine 99 to threonine 118 form a helical membrane-spanning segment. A heme-binding site is contributed by cysteine 109. The Mitochondrial matrix segment spans residues aspartate 119–glycine 127. Position 120 (tyrosine 120) interacts with a ubiquinone. Residues valine 128–isoleucine 148 traverse the membrane as a helical segment. Topologically, residues tyrosine 149–lysine 181 are mitochondrial intermembrane.

Belongs to the CybS family. Forms part of complex II containing four subunits: a flavoprotein (FP), an iron-sulfur protein (IP) and a cytochrome b composed of a large and a small subunit.

It localises to the mitochondrion inner membrane. It functions in the pathway carbohydrate metabolism; tricarboxylic acid cycle. Membrane-anchoring subunit of succinate dehydrogenase (SDH) that is involved in system II of the mitochondrial electron transport chain and is responsible for transferring electrons from succinate to ubiquinone (coenzyme Q). SDH3 and SDH4 form the membrane dimer that anchors the catalytic dimer formed by SDH1 and SDH2 to the matrix surface of the mitochondrial inner membrane. Electrons originating from the catalytic dimer enter the membrane dimer for ubiquinone reduction. The polypeptide is Succinate dehydrogenase [ubiquinone] cytochrome b small subunit, mitochondrial (SDH4) (Saccharomyces cerevisiae (strain ATCC 204508 / S288c) (Baker's yeast)).